Here is a 622-residue protein sequence, read N- to C-terminus: Iron transport multicopper oxidase fio1 (622 aa).

The first 22 residues, 1–22, serve as a signal peptide directing secretion; it reads MNKFFSFPILGLLLTCVRFVVA. Topologically, residues 23-553 are extracellular; sequence KERLFEWNVT…GEMPAGWTSK (531 aa). N-linked (GlcNAc...) asparagine glycosylation is found at Asn30 and Asn79. Plastocyanin-like domains lie at 49-147 and 194-304; these read IGVN…FIIN and TGLF…LSYN. Cu cation is bound by residues His85 and His87. Residues Asn117 and Asn123 are each glycosylated (N-linked (GlcNAc...) asparagine). Cu cation-binding residues include His129 and His131. 8 N-linked (GlcNAc...) asparagine glycosylation sites follow: Asn198, Asn202, Asn234, Asn269, Asn296, Asn338, Asn360, and Asn376. Positions 386-498 constitute a Plastocyanin-like 3 domain; it reads EPVTYGPYTN…SGLLATFIEA (113 aa). Cu cation contacts are provided by His417, His420, His422, His480, Cys481, His482, and His486. A glycan (N-linked (GlcNAc...) asparagine) is linked at Asn532. A helical membrane pass occupies residues 554-574; that stretch reads AIGTMAACVISACIGMGSIIF. Over 575–622 the chain is Cytoplasmic; the sequence is YGASIHPVPTEELDENDDLQEAALENAAMFLDTDKAVEKVVEGKDEIK.

It belongs to the multicopper oxidase family. Cu cation serves as cofactor.

The protein localises to the cell membrane. Could be an iron transport multicopper oxidase, which is required for Fe(2+) high affinity uptake. May be required to oxidize Fe(2+) and release it from the transporter. Essential component of copper-dependent iron transport. This Schizosaccharomyces pombe (strain 972 / ATCC 24843) (Fission yeast) protein is Iron transport multicopper oxidase fio1 (fio1).